The chain runs to 353 residues: tRNA pseudouridine synthase B (353 aa).

D39 functions as the Nucleophile in the catalytic mechanism.

It belongs to the pseudouridine synthase TruB family. Type 1 subfamily.

It catalyses the reaction uridine(55) in tRNA = pseudouridine(55) in tRNA. Its function is as follows. Responsible for synthesis of pseudouridine from uracil-55 in the psi GC loop of transfer RNAs. This Wolbachia pipientis subsp. Culex pipiens (strain wPip) protein is tRNA pseudouridine synthase B.